Here is a 318-residue protein sequence, read N- to C-terminus: Myoblast determination protein 1 (318 aa).

A Peptide (Met-Gly) (interchain with G-Cter in ubiquitin) cross-link involves residue M1. The residue at position 104 (K104) is an N6-methyllysine; by EHMT2. The bHLH domain occupies 109-160 (DRRKAATMRERRRLSKVNEAFETLKRCTSSNPNQRLPKVEILRNAIRYIEGL). Disordered regions lie at residues 174 to 224 (AAAA…RRRN) and 266 to 318 (APAL…YQVL). The segment covering 197–207 (SDASSPRSNCS) has biased composition (polar residues). Over residues 266 to 276 (APALLLADAPP) the composition is skewed to low complexity.

As to quaternary structure, efficient DNA binding requires dimerization with another bHLH protein. Seems to form active heterodimers with ITF-2. Interacts with SUV39H1. Interacts with DDX5. Interacts with CHD2. Interacts with TSC22D3. Interacts with SETD3. Interacts with P-TEFB complex; promotes the transcriptional activity of MYOD1 through its CDK9-mediated phosphorylation. Interacts with CSRP3. Interacts with NUPR1. In terms of processing, phosphorylated by CDK9. This phosphorylation promotes its function in muscle differentiation. Acetylated by a complex containing EP300 and PCAF. The acetylation is essential to activate target genes. Conversely, its deacetylation by SIRT1 inhibits its function. Post-translationally, ubiquitinated on the N-terminus; which is required for proteasomal degradation. In terms of processing, methylation at Lys-104 by EHMT2/G9a inhibits myogenic activity.

Its subcellular location is the nucleus. Its function is as follows. Acts as a transcriptional activator that promotes transcription of muscle-specific target genes and plays a role in muscle differentiation. Together with MYF5 and MYOG, co-occupies muscle-specific gene promoter core region during myogenesis. Induces fibroblasts to differentiate into myoblasts. Interacts with and is inhibited by the twist protein. This interaction probably involves the basic domains of both proteins. The polypeptide is Myoblast determination protein 1 (MYOD1) (Bos taurus (Bovine)).